The primary structure comprises 86 residues: Small ribosomal subunit protein bS16 (86 aa).

It belongs to the bacterial ribosomal protein bS16 family.

The chain is Small ribosomal subunit protein bS16 from Xylella fastidiosa (strain 9a5c).